The sequence spans 98 residues: MFDLRTKVMIGIASTLLIAAIMLITLVFCLYQKISKALKLAKEPECCIDPCKDPNEKIIRAKPIIAETCRNLPCCDDCSIYKDVGSLPPCYCVTNEGL.

A signal peptide spans 1–29 (MFDLRTKVMIGIASTLLIAAIMLITLVFC).

The protein belongs to the FAM24 family.

The protein resides in the secreted. The chain is Protein FAM24A (Fam24a) from Mus musculus (Mouse).